The primary structure comprises 333 residues: HTH-type transcriptional repressor PurR (333 aa).

The HTH lacI-type domain maps to 2–56 (ATIKDVAKLASVSTTTVSHVINKTRFVAEATQKRVWEAVEELNYAPSAVARSLKC). Residues 4 to 23 (IKDVAKLASVSTTTVSHVIN) constitute a DNA-binding region (H-T-H motif). Residues 48–56 (SAVARSLKC) mediate DNA binding. Hypoxanthine contacts are provided by Phe73, Lys189, Thr191, Phe220, and Asp274.

Homodimer.

It participates in purine metabolism; purine nucleotide biosynthesis [regulation]. In terms of biological role, is the main repressor of the genes involved in the de novo synthesis of purine nucleotides, regulating purB, purC, purEK, purF, purHD, purL, purMN and guaBA expression. PurR is allosterically activated to bind its cognate DNA by binding the purine corepressors, hypoxanthine or guanine, thereby effecting transcription repression. The polypeptide is HTH-type transcriptional repressor PurR (Aliivibrio salmonicida (strain LFI1238) (Vibrio salmonicida (strain LFI1238))).